A 443-amino-acid polypeptide reads, in one-letter code: MDYAICPRTKLNGFRTTLNVSPWLVGSLTTMAVRKPTAIQKACIPEILKGRDCIGGSRTGSGKTIAFAVPILQKWAQDPFGIFAVVLTPTRELALQIYEQIKAISAPQSMKPLLITGGTDMRSQALALSQRPHVVIATPGRLADHINTSGEDTVCGLKRVRMVVLDEADRLLAPGPGSMLPDVETCLSALPPSSERQTLLFTATLTPEVRALKSMPRAENKPPVFVTEISTENNGAIPPTLKQTYLKVPMTHREAFLHVLLSTERNSTKPAIIFCNHTKTADLLERMLRRLSHRVTSLHSLLPQSERNSNLARFRASAARILVATDVASRGLDIPSVSLVINFDVPRNPDDYVHRVGRTARAGRHGEAVTLVGQRDVQLVLAIEERVERRMEEWSEEGVSIEGRVVRGGVLKEVGEAKREASGEIEEGRDVLGRKRNKLKKVR.

The Q motif signature appears at 13–41 (GFRTTLNVSPWLVGSLTTMAVRKPTAIQK). A Helicase ATP-binding domain is found at 44 to 223 (IPEILKGRDC…SMPRAENKPP (180 aa)). 57-64 (SRTGSGKT) is a binding site for ATP. Positions 166–169 (DEAD) match the DEAD box motif. One can recognise a Helicase C-terminal domain in the interval 240–402 (TLKQTYLKVP…EWSEEGVSIE (163 aa)).

This sequence belongs to the DEAD box helicase family. DDX49/DBP8 subfamily.

Its subcellular location is the nucleus. The protein localises to the nucleolus. The enzyme catalyses ATP + H2O = ADP + phosphate + H(+). Functionally, ATP-binding RNA helicase involved in 40S ribosomal subunit biogenesis and is required for the normal formation of 18S rRNAs through pre-rRNA processing at A0, A1 and A2 sites. Required for vegetative growth. The chain is ATP-dependent RNA helicase dbp8 (dbp8) from Aspergillus oryzae (strain ATCC 42149 / RIB 40) (Yellow koji mold).